Here is a 240-residue protein sequence, read N- to C-terminus: MATLFIADLHLSLHEPAITAGFLRFLRHEAIHADALYILGDLFDTWIGDDDPQPLHATIAAELYALHQLGITCYFVHGNRDFLIGKRFARQSGMTLLPTENVVDLYGQKILILHGDTLCTDDLAYQKFRRRVHNPFIQQLFLLLPLSLRLKIAAKMRASSQQANQQKSQQIMDVNPEQVLERLRHYQVKTMIHGHTHRPAIHQVDLGKSYGRRAVLGAWHEEGSMIKVTPQNIELISFPF.

The Mn(2+) site is built by D8, H10, D41, N79, and H114. Residue 79 to 80 participates in substrate binding; that stretch reads NR. Substrate is bound by residues D122, S160, N164, K167, and H195. Residues H195 and H197 each contribute to the Mn(2+) site.

Belongs to the LpxH family. It depends on Mn(2+) as a cofactor.

The protein localises to the cell inner membrane. The enzyme catalyses UDP-2-N,3-O-bis[(3R)-3-hydroxytetradecanoyl]-alpha-D-glucosamine + H2O = 2-N,3-O-bis[(3R)-3-hydroxytetradecanoyl]-alpha-D-glucosaminyl 1-phosphate + UMP + 2 H(+). The protein operates within glycolipid biosynthesis; lipid IV(A) biosynthesis; lipid IV(A) from (3R)-3-hydroxytetradecanoyl-[acyl-carrier-protein] and UDP-N-acetyl-alpha-D-glucosamine: step 4/6. Functionally, hydrolyzes the pyrophosphate bond of UDP-2,3-diacylglucosamine to yield 2,3-diacylglucosamine 1-phosphate (lipid X) and UMP by catalyzing the attack of water at the alpha-P atom. Involved in the biosynthesis of lipid A, a phosphorylated glycolipid that anchors the lipopolysaccharide to the outer membrane of the cell. This Pectobacterium atrosepticum (strain SCRI 1043 / ATCC BAA-672) (Erwinia carotovora subsp. atroseptica) protein is UDP-2,3-diacylglucosamine hydrolase.